The primary structure comprises 285 residues: Nucleotide-binding protein PSPPH_4154 (285 aa).

8–15 (GRSGSGKS) contacts ATP. Residue 60–63 (DARN) participates in GTP binding.

This sequence belongs to the RapZ-like family.

Its function is as follows. Displays ATPase and GTPase activities. The polypeptide is Nucleotide-binding protein PSPPH_4154 (Pseudomonas savastanoi pv. phaseolicola (strain 1448A / Race 6) (Pseudomonas syringae pv. phaseolicola (strain 1448A / Race 6))).